We begin with the raw amino-acid sequence, 156 residues long: Peptide deformylase 1 (156 aa).

Residues Cys90 and His132 each coordinate Fe cation. Glu133 is an active-site residue. His136 contacts Fe cation.

The protein belongs to the polypeptide deformylase family. Fe(2+) is required as a cofactor.

The catalysed reaction is N-terminal N-formyl-L-methionyl-[peptide] + H2O = N-terminal L-methionyl-[peptide] + formate. Functionally, removes the formyl group from the N-terminal Met of newly synthesized proteins. Requires at least a dipeptide for an efficient rate of reaction. N-terminal L-methionine is a prerequisite for activity but the enzyme has broad specificity at other positions. The protein is Peptide deformylase 1 of Bacillus cereus (strain ATCC 14579 / DSM 31 / CCUG 7414 / JCM 2152 / NBRC 15305 / NCIMB 9373 / NCTC 2599 / NRRL B-3711).